The chain runs to 355 residues: Protein RecA (355 aa).

67–74 (GPESSGKT) lines the ATP pocket.

It belongs to the RecA family.

It is found in the cytoplasm. Can catalyze the hydrolysis of ATP in the presence of single-stranded DNA, the ATP-dependent uptake of single-stranded DNA by duplex DNA, and the ATP-dependent hybridization of homologous single-stranded DNAs. It interacts with LexA causing its activation and leading to its autocatalytic cleavage. This is Protein RecA from Shewanella piezotolerans (strain WP3 / JCM 13877).